The sequence spans 235 residues: Cytochrome c oxidase subunit 2 (235 aa).

Residues 1-14 (MPYPMQLGFQDATS) are Mitochondrial intermembrane-facing. A helical transmembrane segment spans residues 15–45 (PIMEELMYFHDHTLMIVFLISSLVLYIIILM). The Mitochondrial matrix portion of the chain corresponds to 46–59 (LTTKLTHTSTMDAQ). The helical transmembrane segment at 60–87 (EVETIWTILPAVILILIALPSLRILYMM) threads the bilayer. Residues 88–235 (DEIYNPYLTV…MQSFLSYLYI (148 aa)) are Mitochondrial intermembrane-facing. 6 residues coordinate Cu cation: His161, Cys196, Glu198, Cys200, His204, and Met207. Residue Glu198 coordinates Mg(2+). A Phosphotyrosine modification is found at Tyr218.

It belongs to the cytochrome c oxidase subunit 2 family. Component of the cytochrome c oxidase (complex IV, CIV), a multisubunit enzyme composed of 14 subunits. The complex is composed of a catalytic core of 3 subunits MT-CO1, MT-CO2 and MT-CO3, encoded in the mitochondrial DNA, and 11 supernumerary subunits COX4I, COX5A, COX5B, COX6A, COX6B, COX6C, COX7A, COX7B, COX7C, COX8 and NDUFA4, which are encoded in the nuclear genome. The complex exists as a monomer or a dimer and forms supercomplexes (SCs) in the inner mitochondrial membrane with NADH-ubiquinone oxidoreductase (complex I, CI) and ubiquinol-cytochrome c oxidoreductase (cytochrome b-c1 complex, complex III, CIII), resulting in different assemblies (supercomplex SCI(1)III(2)IV(1) and megacomplex MCI(2)III(2)IV(2)). Found in a complex with TMEM177, COA6, COX18, COX20, SCO1 and SCO2. Interacts with TMEM177 in a COX20-dependent manner. Interacts with COX20. Interacts with COX16. Requires Cu cation as cofactor.

The protein resides in the mitochondrion inner membrane. It carries out the reaction 4 Fe(II)-[cytochrome c] + O2 + 8 H(+)(in) = 4 Fe(III)-[cytochrome c] + 2 H2O + 4 H(+)(out). Its function is as follows. Component of the cytochrome c oxidase, the last enzyme in the mitochondrial electron transport chain which drives oxidative phosphorylation. The respiratory chain contains 3 multisubunit complexes succinate dehydrogenase (complex II, CII), ubiquinol-cytochrome c oxidoreductase (cytochrome b-c1 complex, complex III, CIII) and cytochrome c oxidase (complex IV, CIV), that cooperate to transfer electrons derived from NADH and succinate to molecular oxygen, creating an electrochemical gradient over the inner membrane that drives transmembrane transport and the ATP synthase. Cytochrome c oxidase is the component of the respiratory chain that catalyzes the reduction of oxygen to water. Electrons originating from reduced cytochrome c in the intermembrane space (IMS) are transferred via the dinuclear copper A center (CU(A)) of subunit 2 and heme A of subunit 1 to the active site in subunit 1, a binuclear center (BNC) formed by heme A3 and copper B (CU(B)). The BNC reduces molecular oxygen to 2 water molecules using 4 electrons from cytochrome c in the IMS and 4 protons from the mitochondrial matrix. This is Cytochrome c oxidase subunit 2 (MT-CO2) from Didelphis virginiana (North American opossum).